The following is a 185-amino-acid chain: Elongation factor P (185 aa).

It belongs to the elongation factor P family.

It localises to the cytoplasm. The protein operates within protein biosynthesis; polypeptide chain elongation. Involved in peptide bond synthesis. Stimulates efficient translation and peptide-bond synthesis on native or reconstituted 70S ribosomes in vitro. Probably functions indirectly by altering the affinity of the ribosome for aminoacyl-tRNA, thus increasing their reactivity as acceptors for peptidyl transferase. The sequence is that of Elongation factor P from Burkholderia vietnamiensis (strain G4 / LMG 22486) (Burkholderia cepacia (strain R1808)).